A 320-amino-acid polypeptide reads, in one-letter code: L-lactate dehydrogenase (320 aa).

Residues Val-19, Asp-40, Arg-45, and Gly-85 to Ala-86 each bind NAD(+). Substrate is bound by residues Gln-88 and Arg-94. NAD(+)-binding positions include Ser-107, Ile-124 to Asn-126, and Ser-149. Asn-126–Asp-129 is a binding site for substrate. Substrate is bound at residue Asp-154 to Arg-157. Beta-D-fructose 1,6-bisphosphate-binding residues include Arg-159 and His-174. The Proton acceptor role is filled by His-181. Residue Tyr-228 is modified to Phosphotyrosine. Thr-237 is a substrate binding site.

The protein belongs to the LDH/MDH superfamily. LDH family. Homotetramer.

Its subcellular location is the cytoplasm. The enzyme catalyses (S)-lactate + NAD(+) = pyruvate + NADH + H(+). Its pathway is fermentation; pyruvate fermentation to lactate; (S)-lactate from pyruvate: step 1/1. Allosterically activated by fructose 1,6-bisphosphate (FBP). Functionally, catalyzes the conversion of lactate to pyruvate. The protein is L-lactate dehydrogenase of Bifidobacterium animalis subsp. lactis (strain AD011).